A 305-amino-acid chain; its full sequence is Protoheme IX farnesyltransferase 2 (305 aa).

A run of 8 helical transmembrane segments spans residues 38–58 (LITT…SFLG), 60–80 (INTV…SCAI), 115–135 (ILLV…AAVI), 157–177 (INTV…WTAV), 181–201 (IGVV…PHFL), 227–247 (VTKR…FFLG), 249–269 (LGLP…ILGL), and 285–305 (FVYS…LTLF).

This sequence belongs to the UbiA prenyltransferase family. Protoheme IX farnesyltransferase subfamily. In terms of assembly, interacts with CtaA.

The protein localises to the cell membrane. The catalysed reaction is heme b + (2E,6E)-farnesyl diphosphate + H2O = Fe(II)-heme o + diphosphate. The protein operates within porphyrin-containing compound metabolism; heme O biosynthesis; heme O from protoheme: step 1/1. In terms of biological role, converts heme B (protoheme IX) to heme O by substitution of the vinyl group on carbon 2 of heme B porphyrin ring with a hydroxyethyl farnesyl side group. This Bacillus subtilis (strain 168) protein is Protoheme IX farnesyltransferase 2 (ctaB2).